Consider the following 130-residue polypeptide: kinetoplast-associated protein 2-2 (130 aa).

A propeptide spanning residues Met1–Ala10 is cleaved from the precursor. The interval Glu95–Lys130 is disordered. The segment covering Lys103–Lys130 has biased composition (basic residues).

This sequence belongs to the KAP family. Associates with the kinetoplast DNA network.

The protein resides in the mitochondrion matrix. The protein localises to the kinetoplast. Functionally, histone H1-like DNA-binding protein involved in the organization and segregation of kinetoplast DNA (kDNA). The mitochondrial DNA of kinetoplastid protozoa consists of about 5,000 minicircles and 20 to 30 maxicircles. These circular DNAs are held together by catenation into a highly organized compact disk structure referred to as a kinetoplast DNA (kDNA) network. Binds preferentially to a specific fragment of minicircle DNA and is able to compact kDNA networks through DNA charge neutralization and condensation. The chain is kinetoplast-associated protein 2-2 (KAP2-2) from Crithidia fasciculata.